The sequence spans 378 residues: UPF0754 membrane protein BCE33L0760 (378 aa).

2 consecutive transmembrane segments (helical) span residues 1–21 (MNIWLSMLTTTGLGAIIGGFT) and 357–377 (YLGALLGGMIGIVQGLLLLFL).

The protein belongs to the UPF0754 family.

It localises to the cell membrane. This Bacillus cereus (strain ZK / E33L) protein is UPF0754 membrane protein BCE33L0760.